A 778-amino-acid polypeptide reads, in one-letter code: Hyperosmolality-gated Ca2+ permeable channel 1.4 (778 aa).

10 consecutive transmembrane segments (helical) span residues 7 to 27 (IGLA…LFAI), 101 to 121 (IYLI…SILV), 158 to 178 (FWAH…VLMK), 375 to 395 (FVMH…IAFV), 427 to 447 (FLPG…LMIM), 467 to 487 (YYIF…SAFE), 512 to 532 (ATFF…GEIF), 584 to 604 (PVTP…YLVF), 626 to 646 (VHGR…GLMS), and 651 to 671 (VQST…HRFC). Residues 738-778 (VVQTKRQRSRRTTVASSNASRGSSQSTPFNQLDLGKGKPET) form a disordered region. The span at 753–763 (SSNASRGSSQS) shows a compositional bias: low complexity.

This sequence belongs to the CSC1 (TC 1.A.17) family.

It is found in the membrane. In terms of biological role, acts as an osmosensitive calcium-permeable cation channel. The chain is Hyperosmolality-gated Ca2+ permeable channel 1.4 from Arabidopsis thaliana (Mouse-ear cress).